A 252-amino-acid chain; its full sequence is Type II secretion system protein N (252 aa).

The Cytoplasmic portion of the chain corresponds to 1–4 (MKRA). A helical transmembrane segment spans residues 5-25 (VGYGLLFSTVLMTSVVVHLPA). Over 26–252 (QVALSPLPLP…RYPFNQQGQL (227 aa)) the chain is Periplasmic.

It belongs to the GSP N family.

It is found in the cell inner membrane. Involved in a type II secretion system (T2SS, formerly general secretion pathway, GSP) for the export of proteins. Required for secretion of cholera toxin through the outer membrane. This is Type II secretion system protein N (epsN) from Vibrio cholerae serotype O1 (strain ATCC 39315 / El Tor Inaba N16961).